The primary structure comprises 319 residues: Beta-ketoacyl-[acyl-carrier-protein] synthase III (319 aa).

Residues C113 and H246 contribute to the active site. The tract at residues 247-251 (QANIR) is ACP-binding. The active site involves N276.

The protein belongs to the thiolase-like superfamily. FabH family. Homodimer.

The protein resides in the cytoplasm. It catalyses the reaction malonyl-[ACP] + acetyl-CoA + H(+) = 3-oxobutanoyl-[ACP] + CO2 + CoA. The protein operates within lipid metabolism; fatty acid biosynthesis. Catalyzes the condensation reaction of fatty acid synthesis by the addition to an acyl acceptor of two carbons from malonyl-ACP. Catalyzes the first condensation reaction which initiates fatty acid synthesis and may therefore play a role in governing the total rate of fatty acid production. Possesses both acetoacetyl-ACP synthase and acetyl transacylase activities. Its substrate specificity determines the biosynthesis of branched-chain and/or straight-chain of fatty acids. This Ehrlichia ruminantium (strain Welgevonden) protein is Beta-ketoacyl-[acyl-carrier-protein] synthase III.